We begin with the raw amino-acid sequence, 4235 residues long: Tenellin synthetase (4235 aa).

Residues 15–455 form the Ketosynthase family 3 (KS3) domain; the sequence is SEPIAIVGSA…GTNAHAIIER (441 aa). Residues Cys189, His326, and His375 each act as for beta-ketoacyl synthase activity in the active site. The tract at residues 590–924 is malonyl-CoA:ACP transacylase (MAT) domain; sequence IFTGQGAQWP…ANDAVAFSTA (335 aa). Residues 993-1135 form an N-terminal hotdog fold region; the sequence is HELLGRRMPD…GRIAVHLGAK (143 aa). A dehydratase (DH) domain region spans residues 993-1310; it reads HELLGRRMPD…GFEVRAVGEP (318 aa). Residues 993–1313 enclose the PKS/mFAS DH domain; that stretch reads HELLGRRMPD…VRAVGEPDAS (321 aa). His1025 serves as the catalytic Proton acceptor; for dehydratase activity. The interval 1158 to 1313 is C-terminal hotdog fold; that stretch reads LQQLDCEKLY…VRAVGEPDAS (156 aa). The Proton donor; for dehydratase activity role is filled by Asp1217. The methyltransferase (MT) domain stretch occupies residues 1459–1652; it reads RLYTEDKGMH…FSGVDHIVHD (194 aa). The tract at residues 2208–2381 is ketoreductase (KR) domain; that stretch reads TYLMVGAAGG…AASIIHVGHV (174 aa). One can recognise a Carrier 1 domain in the interval 2500-2580; the sequence is EAAAAALKGF…QLSALAAKLA (81 aa). An O-(pantetheine 4'-phosphoryl)serine modification is found at Ser2540. The segment at 2587 to 2709 is disordered; it reads RAQLEEASGN…EISSNGFFTQ (123 aa). Positions 2605–2619 are enriched in basic and acidic residues; the sequence is NDKETGPSKKGKAQE. Composition is skewed to polar residues over residues 2645-2659 and 2666-2678; these read GGSS…SSVS and QEST…NNGE. Positions 2679–2695 are enriched in low complexity; the sequence is STPSKSSNCNSDSGSDN. The condensation (C) domain stretch occupies residues 2720–3163; that stretch reads REAPMSPAQS…TAQSVGDCVV (444 aa). The tract at residues 3197-3609 is adenylation (A) (KR) domain; the sequence is CQQHSTKSAI…DGTLLCFGRI (413 aa). A disordered region spans residues 3724 to 3750; the sequence is DEAAAATSPSNDNNNNNTPSGGGGEKM. Residues 3726 to 3742 show a composition bias toward low complexity; that stretch reads AAAATSPSNDNNNNNTP. Residues 3748–3833 enclose the Carrier 2 domain; it reads EKMTVRQGEL…GMARCVAEQR (86 aa). Ser3793 is subject to O-(pantetheine 4'-phosphoryl)serine. Positions 3860 to 3889 are disordered; sequence EKLQHSSASSSSSSSSSSAGSSSTQRPRKT. A compositionally biased stretch (low complexity) spans 3865–3882; the sequence is SSASSSSSSSSSSAGSSS. The tract at residues 3896–4141 is reductase (RED) domain; the sequence is LTGATGFLGG…LDFGQVDKVV (246 aa).

It in the C-terminal section; belongs to the NRP synthetase family.

It functions in the pathway secondary metabolite biosynthesis. Its function is as follows. Hybrid PKS-NRPS synthetase; part of the gene cluster that mediates the biosynthesis of tenellin-type 2-pyridones, iron-chelating compounds involved in iron stress tolerance, competition with the natural competitor fungus Metarhizium robertsii and insect hosts infection. TenS catalyzes the assembly of the polyketide-amino acid backbone. Because tenS lacks a designated enoylreductase (ER) domain, the required activity is provided the enoyl reductase tenC. Upon formation of the polyketide backbone on the thiotemplate, the triketide is transferred to the NRPS module and linked to tyrosine to produce the pyrrolidine-2-dione intermediates, including pretellinin A, 11-hydropretellenin A, 12-hydropretellenin A, 13-hydropretellenin A, 14-hydropretellenin A, 12-oxopretellenin A and prototellinin D. The pathway begins with the assembly of the polyketide-amino acid backbone by the hybrid PKS-NRPS tenS with the help of the enoyl reductase tenC. These enzymes catalyze the synthesis of the pyrrolidine-2-dione intermediates pretellinin A, 11-hydropretellenin A, 12-hydropretellenin A, 13-hydropretellenin A, 14-hydropretellenin A, 12-oxopretellenin A and prototellinin D. The cytochrome P450 monooxygenase tenA then catalyzes an oxidative ring expansion of pretenellin A and 14-hydropretellenin A to form the 2-pyridone core, leading to pretenellin B and pyridovericin, respectively. The cytochrome P450 monooxygenase tenB is then required for the selective N-hydroxylation of the 2-pyridone nitrogen of yield tellinin and 15-hydroxytellenin (15-HT), respectively. The UDP-glucosyltransferase GT1 and the methyltransferase MT1, located outside the tenS gene cluster, contribute to the stepwise glycosylation and methylation of 15-HT to obtain the glycoside pyridovericin-N-O-(4-O-methyl-beta-D-glucopyranoside) (PMGP). Additional related compounds such as 1-O-methyl-15-HT, (8Z)-1-O-methyl-15-HT, and O-methyltenellin A are also produced but the enzymes involved in their biosynthesis have still to be determined. This chain is Tenellin synthetase, found in Beauveria bassiana (strain ARSEF 2860) (White muscardine disease fungus).